The sequence spans 214 residues: Dimethylamine corrinoid protein 2 (214 aa).

The B12-binding N-terminal domain occupies 1-91 (MATKEELIQE…DMPAGAATKK (91 aa)). Residues 92-214 (LGVIVNGTVE…AVAKAKELLL (123 aa)) form the B12-binding domain. Residue His-105 coordinates methylcob(III)alamin.

This sequence belongs to the methylamine corrinoid protein family.

The protein operates within one-carbon metabolism; methanogenesis from dimethylamine. Acts as a methyl group carrier between MtbB and MtbA. The polypeptide is Dimethylamine corrinoid protein 2 (mtbC2) (Methanosarcina mazei (strain ATCC BAA-159 / DSM 3647 / Goe1 / Go1 / JCM 11833 / OCM 88) (Methanosarcina frisia)).